A 258-amino-acid polypeptide reads, in one-letter code: Proteasome subunit alpha (258 aa).

The protein belongs to the peptidase T1A family. In terms of assembly, the 20S proteasome core is composed of 14 alpha and 14 beta subunits that assemble into four stacked heptameric rings, resulting in a barrel-shaped structure. The two inner rings, each composed of seven catalytic beta subunits, are sandwiched by two outer rings, each composed of seven alpha subunits. The catalytic chamber with the active sites is on the inside of the barrel. Has a gated structure, the ends of the cylinder being occluded by the N-termini of the alpha-subunits. Is capped by the proteasome-associated ATPase, ARC.

The protein resides in the cytoplasm. The protein operates within protein degradation; proteasomal Pup-dependent pathway. Its activity is regulated as follows. The formation of the proteasomal ATPase ARC-20S proteasome complex, likely via the docking of the C-termini of ARC into the intersubunit pockets in the alpha-rings, may trigger opening of the gate for substrate entry. Interconversion between the open-gate and close-gate conformations leads to a dynamic regulation of the 20S proteasome proteolysis activity. Functionally, component of the proteasome core, a large protease complex with broad specificity involved in protein degradation. The chain is Proteasome subunit alpha from Nocardia farcinica (strain IFM 10152).